The chain runs to 350 residues: MIFTMYFFRNFVFLHSFMNYIIKVKSILINRYSLATCNAILLYFFQTNYYKIYLLVNTSLSFYNLIFFLRNFLRIVKKKNDPKVFLLALLIISKNYIQYALYCNFLFQVGNRTLKVIKSVEISKNEILKNDPSLKALEFWKKIKIFYSKNFISKIAVIMVISFSGYCAFNFAFKFFGVLKESSKILASFFSFNHDQKNDNSEDNRSEDDLKSSQDPVNIPSIEQSFKVEDFSIFNPDFWSTDFDKILLEEGYDLEGSLSTLWLTPRTFIVMKRIVQTGFYLSMCVANAYAIAETVKRGQPVSNDMLQFNPTLQTGFVYPYGQSMSAPGQIPGGIWAERLFLKKKCLLHKI.

Basic and acidic residues predominate over residues 197 to 212 (KNDNSEDNRSEDDLKS). The disordered stretch occupies residues 197 to 217 (KNDNSEDNRSEDDLKSSQDPV).

It is found in the plastid. The protein resides in the chloroplast. This is an uncharacterized protein from Euglena gracilis.